The primary structure comprises 259 residues: Major prion protein (259 aa).

The N-terminal stretch at 1–24 (MGKIQLGYWILVLFIVTWSDLGLC) is a signal peptide. An interaction with GRB2, ERI3 and SYN1 region spans residues 25–235 (KKPKPRPGGG…EYEAAAQRAY (211 aa)). The disordered stretch occupies residues 29 to 110 (PRPGGGWNSG…GYNKWKPDKP (82 aa)). Positions 63, 64, 72, 74, 82, 84, 92, and 94 each coordinate Cu(2+). The span at 91 to 101 (PHGGSNWGQGG) shows a compositional bias: gly residues. An intrachain disulfide couples Cys-184 to Cys-219. Residues Asn-186 and Asn-202 are each glycosylated (N-linked (GlcNAc...) asparagine). Residue Asn-236 is the site of GPI-anchor amidated asparagine attachment. Residues 237-259 (MAFFSAPPVTLLFLSFLIFLIVS) constitute a propeptide, removed in mature form.

This sequence belongs to the prion family. Monomer and homodimer. Has a tendency to aggregate into amyloid fibrils containing a cross-beta spine, formed by a steric zipper of superposed beta-strands. Soluble oligomers may represent an intermediate stage on the path to fibril formation. Copper binding may promote oligomerization. Interacts with GRB2, APP, ERI3/PRNPIP and SYN1. Mislocalized cytosolically exposed PrP interacts with MGRN1; this interaction alters MGRN1 subcellular location and causes lysosomal enlargement. Interacts with KIAA1191.

It is found in the cell membrane. Its subcellular location is the golgi apparatus. In terms of biological role, its primary physiological function is unclear. Has cytoprotective activity against internal or environmental stresses. May play a role in neuronal development and synaptic plasticity. May be required for neuronal myelin sheath maintenance. May play a role in iron uptake and iron homeostasis. Soluble oligomers are toxic to cultured neuroblastoma cells and induce apoptosis (in vitro). Association with GPC1 (via its heparan sulfate chains) targets PRNP to lipid rafts. Also provides Cu(2+) or Zn(2+) for the ascorbate-mediated GPC1 deaminase degradation of its heparan sulfate side chains. This chain is Major prion protein (PRNP), found in Trichosurus vulpecula (Brush-tailed possum).